Reading from the N-terminus, the 586-residue chain is Protein NRT1/ PTR FAMILY 5.3 (586 aa).

11 helical membrane-spanning segments follow: residues 77–97 (WVGT…AHFG), 100–120 (ITFV…TLSV), 141–161 (ASVI…IGTG), 189–209 (FFNW…TVLV), 217–237 (WAIG…IFLL), 334–354 (PVLF…TLFI), 370–390 (IPPA…IVIY), 408–428 (ITLL…MIIA), 449–469 (AVPI…MGLA), 492–512 (LGTS…SILL), and 538–558 (NYYM…LVVI).

This sequence belongs to the major facilitator superfamily. Proton-dependent oligopeptide transporter (POT/PTR) (TC 2.A.17) family. In terms of tissue distribution, expressed in roots and siliques.

It localises to the membrane. Peptide transporter. This chain is Protein NRT1/ PTR FAMILY 5.3 (NPF5.3), found in Arabidopsis thaliana (Mouse-ear cress).